A 1417-amino-acid chain; its full sequence is DNA-directed RNA polymerase subunit beta' (1417 aa).

Residues cysteine 68, cysteine 70, cysteine 83, and cysteine 86 each coordinate Zn(2+). Positions 458, 460, and 462 each coordinate Mg(2+). Positions 811, 884, 891, and 894 each coordinate Zn(2+).

Belongs to the RNA polymerase beta' chain family. In terms of assembly, the RNAP catalytic core consists of 2 alpha, 1 beta, 1 beta' and 1 omega subunit. When a sigma factor is associated with the core the holoenzyme is formed, which can initiate transcription. It depends on Mg(2+) as a cofactor. The cofactor is Zn(2+).

It catalyses the reaction RNA(n) + a ribonucleoside 5'-triphosphate = RNA(n+1) + diphosphate. In terms of biological role, DNA-dependent RNA polymerase catalyzes the transcription of DNA into RNA using the four ribonucleoside triphosphates as substrates. The chain is DNA-directed RNA polymerase subunit beta' from Francisella tularensis subsp. holarctica (strain OSU18).